The chain runs to 399 residues: Flavohemoprotein (399 aa).

Residues 1–138 (MLDNKTIEII…IADAFIGIEK (138 aa)) enclose the Globin domain. His-85 serves as a coordination point for heme b. Catalysis depends on charge relay system residues Tyr-95 and Glu-137. The segment at 149 to 399 (GGWKEYKPFV…GPQLSLAQSV (251 aa)) is reductase. Residues 152–255 (KEYKPFVIAK…SAPAGDFVLD (104 aa)) enclose the FAD-binding FR-type domain. FAD-binding positions include Tyr-190 and 206 to 209 (RQYS). Residue 268–273 (GVGITP) participates in NADP(+) binding. 388-391 (LFGP) serves as a coordination point for FAD.

This sequence belongs to the globin family. Two-domain flavohemoproteins subfamily. It in the C-terminal section; belongs to the flavoprotein pyridine nucleotide cytochrome reductase family. The cofactor is heme b. It depends on FAD as a cofactor.

The catalysed reaction is 2 nitric oxide + NADPH + 2 O2 = 2 nitrate + NADP(+) + H(+). It catalyses the reaction 2 nitric oxide + NADH + 2 O2 = 2 nitrate + NAD(+) + H(+). In terms of biological role, is involved in NO detoxification in an aerobic process, termed nitric oxide dioxygenase (NOD) reaction that utilizes O(2) and NAD(P)H to convert NO to nitrate, which protects the bacterium from various noxious nitrogen compounds. Therefore, plays a central role in the inducible response to nitrosative stress. The chain is Flavohemoprotein (hmp) from Bacillus subtilis (strain 168).